Here is a 177-residue protein sequence, read N- to C-terminus: Large ribosomal subunit protein uL6 (177 aa).

Belongs to the universal ribosomal protein uL6 family. As to quaternary structure, part of the 50S ribosomal subunit.

This protein binds to the 23S rRNA, and is important in its secondary structure. It is located near the subunit interface in the base of the L7/L12 stalk, and near the tRNA binding site of the peptidyltransferase center. The protein is Large ribosomal subunit protein uL6 of Aeromonas hydrophila subsp. hydrophila (strain ATCC 7966 / DSM 30187 / BCRC 13018 / CCUG 14551 / JCM 1027 / KCTC 2358 / NCIMB 9240 / NCTC 8049).